A 641-amino-acid polypeptide reads, in one-letter code: Ribosomal oxygenase 1 (641 aa).

Residue M1 is modified to N-acetylmethionine. Disordered regions lie at residues M1–R35 and R54–P80. Basic residues predominate over residues R12–Q23. Residues S60, S63, and S109 each carry the phosphoserine modification. Residues C294 to A439 enclose the JmjC domain. 3 residues coordinate Fe cation: H340, D342, and H405.

It belongs to the ROX family. NO66 subfamily. As to quaternary structure, interacts with SP7/OSX; the interaction is direct. Interacts with MYC. Interacts with PHF19; leading to its recruitment to H3K36me3 sites. It depends on Fe(2+) as a cofactor. Widely expressed. Overexpressed in lung carcinomas.

Its subcellular location is the nucleus. The protein localises to the nucleolus. It is found in the nucleoplasm. The catalysed reaction is N(6),N(6)-dimethyl-L-lysyl(36)-[histone H3] + 2 2-oxoglutarate + 2 O2 = L-lysyl(36)-[histone H3] + 2 formaldehyde + 2 succinate + 2 CO2. The enzyme catalyses N(6)-methyl-L-lysyl-[protein] + 2-oxoglutarate + O2 = L-lysyl-[protein] + formaldehyde + succinate + CO2. It carries out the reaction L-histidyl-[protein] + 2-oxoglutarate + O2 = (3S)-3-hydroxy-L-histidyl-[protein] + succinate + CO2. Oxygenase that can act as both a histone lysine demethylase and a ribosomal histidine hydroxylase. Specifically demethylates 'Lys-4' (H3K4me) and 'Lys-36' (H3K36me) of histone H3, thereby playing a central role in histone code. Preferentially demethylates trimethylated H3 'Lys-4' (H3K4me3) and monomethylated H3 'Lys-4' (H3K4me1) residues, while it has weaker activity for dimethylated H3 'Lys-36' (H3K36me2). Acts as a regulator of osteoblast differentiation via its interaction with SP7/OSX by demethylating H3K4me and H3K36me, thereby inhibiting SP7/OSX-mediated promoter activation. Also catalyzes demethylation of non-histone proteins, such as CGAS: demethylation of monomethylated CGAS promotes interaction between CGAS and PARP1, followed by PARP1 inactivation. Also catalyzes the hydroxylation of 60S ribosomal protein L8 on 'His-216', thereby playing a role in ribosome biogenesis. Participates in MYC-induced transcriptional activation. The chain is Ribosomal oxygenase 1 from Homo sapiens (Human).